A 359-amino-acid chain; its full sequence is MENPRTTPTPTPLRRRRSERRARGGRVLTALTGVTLLAGLAIAPAATGASPSPAPPASPAPSADSGTADAGTTALPSMELYRAEAGVHAWLDANPGDHRAPLIAERIGSQPQAVWFAGAYNPGTITQQVAEVTSAAAAAGQLPVVVPYMIPFRDCGNHSGGGAPSFAAYAEWSGLFAAGLGSEPVVVVLEPDAIPLIDCLDNQQRAERLAALAGLAEAVTDANPEARVYYDVGHSAWHAPAAIAPTLVEAGILEHGAGIATNISNYRTTTDETAYASAVIAELGGGLGAVVDTSRNGNGPLGSEWCDPPGRLVGNNPTVNPGVPGVDAFLWIKLPGELDGCDGPVGSFSPAKAYELAGG.

Disordered stretches follow at residues 1–26 (MENPRTTPTPTPLRRRRSERRARGGR) and 47–72 (TGASPSPAPPASPAPSADSGTADAGT). The span at 13-24 (LRRRRSERRARG) shows a compositional bias: basic residues. Over residues 60-72 (APSADSGTADAGT) the composition is skewed to low complexity. Asp-154 is an active-site residue. An intrachain disulfide couples Cys-155 to Cys-199. The active-site Proton donor is the Asp-192. Catalysis depends on Asp-339, which acts as the Nucleophile.

The protein belongs to the glycosyl hydrolase 6 (cellulase B) family.

It catalyses the reaction Endohydrolysis of (1-&gt;4)-beta-D-glucosidic linkages in cellulose, lichenin and cereal beta-D-glucans.. In terms of biological role, CMCase I preferentially hydrolyzes carboxymethyl cellulose (CMC). This is Endoglucanase 1 (casA) from Streptomyces sp. (strain KSM-9).